The sequence spans 120 residues: C-C motif chemokine 16 (120 aa).

A signal peptide spans 1–23 (MKVSEAALSLLVLILIITSASRS). Disulfide bonds link Cys-37–Cys-60 and Cys-38–Cys-76.

Belongs to the intercrine beta (chemokine CC) family. Mainly expressed in liver, also found in spleen and thymus. Highly expressed in LPS- and IFN-gamma-activated monocytes, weakly in some lymphocytes, including natural killer cells, gamma-delta T-cells, and some T-cell clones.

It is found in the secreted. Shows chemotactic activity for lymphocytes and monocytes but not neutrophils. Also shows potent myelosuppressive activity, suppresses proliferation of myeloid progenitor cells. Recombinant SCYA16 shows chemotactic activity for monocytes and THP-1 monocytes, but not for resting lymphocytes and neutrophils. Induces a calcium flux in THP-1 cells that were desensitized by prior expression to RANTES. The protein is C-C motif chemokine 16 (CCL16) of Homo sapiens (Human).